A 188-amino-acid chain; its full sequence is Pupal cuticle protein Edg-84A (188 aa).

The first 17 residues, 1–17, serve as a signal peptide directing secretion; it reads MLVKTALFVTLIGLAQA. The tract at residues 19 to 67 is disordered; the sequence is PLPAKSSGSEDTYDSHPQYSFNYDVQDPETGDVKSQSESRDGDVVHGQY. The segment covering 24 to 41 has biased composition (polar residues); sequence SSGSEDTYDSHPQYSFNY. One can recognise a Chitin-binding type R&amp;R domain in the interval 34 to 100; it reads HPQYSFNYDV…AVVRREPLSS (67 aa). Basic and acidic residues predominate over residues 49-62; the sequence is GDVKSQSESRDGDV.

As to expression, imaginal (anterior) epidermis.

In terms of biological role, component of the cuticle of the pupa of fruit fly. The chain is Pupal cuticle protein Edg-84A (Edg84A) from Drosophila melanogaster (Fruit fly).